Consider the following 1312-residue polypeptide: Tetratricopeptide repeat protein 21B (1312 aa).

6 TPR repeats span residues 4–38 (TDHYITAGIIYYCQEKYHQHVQNLAREGLKKYSND), 110–143 (PKALYYAGMFLWLMGRTDKAREYIDRMLKISNRS), 147–180 (LVLRGWLDLSSEKESTVNKSIRYFEEGIQDNKDI), 182–213 (ALIGKAQYFMAHQNYSGALDVINQIIVNYPPF), 214–247 (LPALTLKMRLFLAQQDWDQTLETAQRILLKDGAN), and 325–358 (AEVATALANNFILQGNVTEAAGWYATAMKLDGNH). The stretch at 365 to 392 (VIQCQILQGQLEEAEQQLDFLHEIQESI) forms a coiled coil. TPR repeat units lie at residues 493–526 (TEPLYYTAQIKYLAGNLEGAQGSLQRCIEVDTAC), 528–560 (DFHLLMAQIHYAQGKFAECSVSLETGVSHNFKV), 564–597 (PLYHLIRARVLRKTGELQEAIKTLKMTMSLQEMK), 615–648 (VSIYLELAELLRLNGEQHEATKIIQDAINEFGGT), 720–753 (PHTSVLLGDALMNIQEPEKALEVYNEALHKNPQD), 755–787 (SLANRIGQALIKTHQYKKAVNYYEAAQKISGQD), 789–820 (LCCDLAELLIKLKQYSKAEAVLKQALAHEPVS), 829–861 (AKCLGLLGTTYQNYKKEESADILNKALELQQRI), 881–914 (SEICVQLAEHYVDQRNYEQAANYYKEAMVYSQDS), 916–947 (VKLQLSRLYLMMGDLDSCENHCSALLENHSFK), 948–981 (EEAAMMMADVMFRKQDYTKSIELFDQILEENPDN), 983–1015 (AVLSKLIDLLRRSGNLSKAPMFFEKALANSSRT), 1019–1052 (PGYNYCKGLYCWYLGQPNDGLKYFNKARKDSEWG), 1193–1226 (EKSWLLLADVYIKLGKYDIATELLKRCLLYNKSC), 1228–1260 (KAYEYLGFIMENEQSYKDAAANYRLAWDYSNQS), and 1262–1295 (PAVGFRLAFNYLKDKKYVDAIDICHKVLKAHPTY).

Belongs to the TTC21 family. As to quaternary structure, component of the IFT complex A (IFT-A).

In terms of biological role, component of the IFT complex A (IFT-A), a complex required for retrograde ciliary transport and entry into cilia of G protein-coupled receptors (GPCRs). Negatively modulates the SHH signal transduction. This chain is Tetratricopeptide repeat protein 21B (ttc21b), found in Xenopus laevis (African clawed frog).